Reading from the N-terminus, the 316-residue chain is Spore wall protein 30 (316 aa).

The N-terminal stretch at 1–18 (MKTSVVILAMSYITSIFA) is a signal peptide. 2 N-linked (GlcNAc...) asparagine glycosylation sites follow: N19 and N251.

The protein resides in the spore. The protein localises to the perispore. In Nosema bombycis (strain CQ1 / CVCC 102059) (Microsporidian parasite), this protein is Spore wall protein 30 (SWP32).